A 177-amino-acid chain; its full sequence is B-phycoerythrin beta chain (177 aa).

The phycourobilin site is built by C50 and C61. N72 carries the post-translational modification N4-methylasparagine. 2 residues coordinate (2R,3E)-phycoerythrobilin: C82 and C158.

Belongs to the phycobiliprotein family. As to quaternary structure, heteromer of 6 alpha, 6 beta and one gamma chain. In terms of processing, contains two covalently linked phycoerythrobilin chromophores and one covalently linked phycourobilin chromophore.

The protein localises to the plastid. The protein resides in the chloroplast thylakoid membrane. Functionally, light-harvesting photosynthetic bile pigment-protein from the phycobiliprotein complex. The polypeptide is B-phycoerythrin beta chain (cpeB) (Rhodella violacea (Red alga)).